Here is a 314-residue protein sequence, read N- to C-terminus: Ribosome maturation factor RimP (314 aa).

Disordered stretches follow at residues 1–20 (MDLDGKVQPPSAQVGQQPLS), 152–176 (PIEASSPIGGSKGALRLTRTDAKPE), and 206–314 (AAKA…PAPK). Positions 10-19 (PSAQVGQQPL) are enriched in polar residues. Residues 215-227 (DGNNEEQDEEQEE) show a composition bias toward acidic residues. A compositionally biased stretch (polar residues) spans 247 to 256 (PEHNPAQNPI). Composition is skewed to basic and acidic residues over residues 270–279 (TEFKKSKTGE) and 303–314 (SGHDMPRKPAPK).

The protein belongs to the RimP family.

The protein resides in the cytoplasm. Required for maturation of 30S ribosomal subunits. The polypeptide is Ribosome maturation factor RimP (Beijerinckia indica subsp. indica (strain ATCC 9039 / DSM 1715 / NCIMB 8712)).